Reading from the N-terminus, the 359-residue chain is Outer membrane protein assembly factor BamC (359 aa).

The N-terminal stretch at 1–34 is a signal peptide; sequence MASLFDKNSFQMTRLQKTAVAKVVGVSLIMLLAA. Cys-35 is lipidated: N-palmitoyl cysteine. Cys-35 carries the S-diacylglycerol cysteine lipid modification.

The protein belongs to the BamC family. Part of the Bam complex, which is composed of the outer membrane protein BamA, and four lipoproteins BamB, BamC, BamD and BamE.

It is found in the cell outer membrane. Its function is as follows. Part of the outer membrane protein assembly complex, which is involved in assembly and insertion of beta-barrel proteins into the outer membrane. The polypeptide is Outer membrane protein assembly factor BamC (Rahnella sp. (strain Y9602)).